Reading from the N-terminus, the 141-residue chain is Large ribosomal subunit protein uL16 (141 aa).

Belongs to the universal ribosomal protein uL16 family. In terms of assembly, part of the 50S ribosomal subunit. Contacts the CTC protein (RL25).

In terms of biological role, binds the 5S and 23S rRNAs and is also seen to make contacts with the A and P site tRNAs. Interacts with A site tRNA mimics, and is probably one of the key factors, along with a helix of the 23S rRNA, in positioning tRNA stems in the peptidyl-transferase center. This is Large ribosomal subunit protein uL16 (rplP) from Deinococcus radiodurans (strain ATCC 13939 / DSM 20539 / JCM 16871 / CCUG 27074 / LMG 4051 / NBRC 15346 / NCIMB 9279 / VKM B-1422 / R1).